The chain runs to 266 residues: MHVNGKVALVTGAAQGIGKAFTEALLLHGAKVALVDWNLETGVKCKAALDEQFEPQKTLFIQCDVADQKQLRDTFRKVVDHFGRLDILVNNAGVNNEKNWEQTLQINLVSVISGTYLGLDYMSKQNGGEGGIIINISSIAGLMPVAQQPVYCASKHGIIGFTRSAAMAANLMKSGVRLNVICPGFVKTPILESIEKEENMGQYIEYTDQIKAMMKFYGILDPSAIANGLINLIEDDALNGAIMKITASKGIHFQDYDLFPSFSKAP.

NAD(+)-binding positions include 12 to 20, 36 to 37, 63 to 65, and Asn-91; these read GAAQGIGKA, DW, and CDV. Residues Ser-138 and Gln-148 each contribute to the substrate site. Tyr-151 (proton acceptor) is an active-site residue. NAD(+) contacts are provided by residues 151-155 and 186-188; these read YCASK and VKT.

The protein belongs to the short-chain dehydrogenases/reductases (SDR) family. Homodimer.

The protein localises to the cytoplasm. It catalyses the reaction prostaglandin E2 + NAD(+) = 15-oxoprostaglandin E2 + NADH + H(+). The catalysed reaction is (15S)-hydroxy-(5Z,8Z,11Z,13E)-eicosatetraenoate + NAD(+) = 15-oxo-(5Z,8Z,11Z,13E)-eicosatetraenoate + NADH + H(+). It carries out the reaction (11R)-hydroxy-(5Z,8Z,12E,14Z)-eicosatetraenoate + NAD(+) = 11-oxo-(5Z,8Z,12E,14Z)-eicosatetraenoate + NADH + H(+). The enzyme catalyses lipoxin A4 + NAD(+) = 15-oxo-(5S,6R)-dihydroxy-(7E,9E,11Z,13E)-eicosatetraenoate + NADH + H(+). It catalyses the reaction 15-oxo-(5S,6R)-dihydroxy-(7E,9E,11Z)-eicosatrienoate + NADH + H(+) = (5S,6R,15S)-trihydroxy-(7E,9E,11Z)-eicosatrienoate + NAD(+). The catalysed reaction is prostaglandin A1 + NAD(+) = 15-oxo-prostaglandin A1 + NADH + H(+). It carries out the reaction prostaglandin E1 + NAD(+) = 15-oxoprostaglandin E1 + NADH + H(+). The enzyme catalyses 14-hydroxy-(4Z,7Z,10Z,12E,16Z,19Z)-docosahexaenoate + NAD(+) = 14-oxo-(4Z,7Z,10Z,12E,16Z,19Z)-docosahexaenoate + NADH + H(+). It catalyses the reaction resolvin E1 + NAD(+) = 18-oxo-resolvin E1 + NADH + H(+). The catalysed reaction is resolvin D1 + NAD(+) = 8-oxoresolvin D1 + NADH + H(+). It carries out the reaction resolvin D1 + NAD(+) = 17-oxoresolvin D1 + NADH + H(+). The enzyme catalyses resolvin D2 + NAD(+) = 7-oxoresolvin D2 + NADH + H(+). It catalyses the reaction resolvin D2 + NAD(+) = 16-oxoresolvin D2 + NADH + H(+). In terms of biological role, catalyzes the NAD-dependent dehydrogenation (oxidation) of a broad array of hydroxylated polyunsaturated fatty acids (mainly eicosanoids and docosanoids, including prostaglandins, lipoxins and resolvins), yielding their corresponding keto (oxo) metabolites. Decreases the levels of the pro-proliferative prostaglandins such as prostaglandin E2 (whose activity is increased in cancer because of an increase in the expression of cyclooxygenase 2) and generates oxo-fatty acid products that can profoundly influence cell function by abrogating pro-inflammatory cytokine expression. Converts resolvins E1, D1 and D2 to their oxo products, which represents a mode of resolvin inactivation. Resolvin E1 plays important roles during the resolution phase of acute inflammation, while resolvins D1 and D2 have a unique role in obesity-induced adipose inflammation. This Rattus norvegicus (Rat) protein is 15-hydroxyprostaglandin dehydrogenase [NAD(+)] (Hpgd).